The sequence spans 422 residues: Zinc finger protein zfp-2 (422 aa).

Residues 95-119 (AIPCTSSSMQPSTSSNPSSGEHQPV) form a disordered region. The span at 99 to 113 (TSSSMQPSTSSNPSS) shows a compositional bias: low complexity. 7 consecutive C2H2-type zinc fingers follow at residues 171–194 (YRCTNCKTYFGNKEVYQRHIQEVH), 200–222 (FRCFNCGMRFANKTSMTHHLKDH), 229–251 (FSCDYCPRIFSKLESKTRHHKMH), 255–278 (STCQTCMRFFTTEDALRHHQSTAH), 300–322 (YSCSYCNLRFHFKKDMLVHERIH), 328–350 (YSCGYCMKSFAQSQALTAHIRTH), and 356–379 (YGCGKCDKRFRDNSCLRKHELAAH).

Expressed in vulval cells and all somatic gonad structures such as spermatheca, sheath cells, uterine cells and distal tip cells.

The protein localises to the nucleus. Probable zinc finger transcription factor that acts as a transcriptional repressor. Acts redundantly with the transcriptional repressor lin-35 to control the development of somatic gonad lineages. May, in addition, suppress sensitivity to RNAi. The protein is Zinc finger protein zfp-2 of Caenorhabditis elegans.